A 350-amino-acid chain; its full sequence is Holliday junction branch migration complex subunit RuvB (350 aa).

A disordered region spans residues 1-20 (MIEADRLITASPREREEQQD). The large ATPase domain (RuvB-L) stretch occupies residues 4–184 (ADRLITASPR…FGIVQRLEFY (181 aa)). ATP contacts are provided by residues isoleucine 23, arginine 24, glycine 65, lysine 68, threonine 69, threonine 70, 131-133 (EDF), arginine 174, tyrosine 184, and arginine 221. Threonine 69 contributes to the Mg(2+) binding site. The tract at residues 185–255 (GIDDLATIVT…IADQALNLLD (71 aa)) is small ATPAse domain (RuvB-S). The head domain (RuvB-H) stretch occupies residues 258 to 350 (ERGFDHSDRR…SGDLFAVSDE (93 aa)). Arginine 294, arginine 313, and arginine 318 together coordinate DNA.

Belongs to the RuvB family. In terms of assembly, homohexamer. Forms an RuvA(8)-RuvB(12)-Holliday junction (HJ) complex. HJ DNA is sandwiched between 2 RuvA tetramers; dsDNA enters through RuvA and exits via RuvB. An RuvB hexamer assembles on each DNA strand where it exits the tetramer. Each RuvB hexamer is contacted by two RuvA subunits (via domain III) on 2 adjacent RuvB subunits; this complex drives branch migration. In the full resolvosome a probable DNA-RuvA(4)-RuvB(12)-RuvC(2) complex forms which resolves the HJ.

The protein resides in the cytoplasm. It carries out the reaction ATP + H2O = ADP + phosphate + H(+). Its function is as follows. The RuvA-RuvB-RuvC complex processes Holliday junction (HJ) DNA during genetic recombination and DNA repair, while the RuvA-RuvB complex plays an important role in the rescue of blocked DNA replication forks via replication fork reversal (RFR). RuvA specifically binds to HJ cruciform DNA, conferring on it an open structure. The RuvB hexamer acts as an ATP-dependent pump, pulling dsDNA into and through the RuvAB complex. RuvB forms 2 homohexamers on either side of HJ DNA bound by 1 or 2 RuvA tetramers; 4 subunits per hexamer contact DNA at a time. Coordinated motions by a converter formed by DNA-disengaged RuvB subunits stimulates ATP hydrolysis and nucleotide exchange. Immobilization of the converter enables RuvB to convert the ATP-contained energy into a lever motion, pulling 2 nucleotides of DNA out of the RuvA tetramer per ATP hydrolyzed, thus driving DNA branch migration. The RuvB motors rotate together with the DNA substrate, which together with the progressing nucleotide cycle form the mechanistic basis for DNA recombination by continuous HJ branch migration. Branch migration allows RuvC to scan DNA until it finds its consensus sequence, where it cleaves and resolves cruciform DNA. The polypeptide is Holliday junction branch migration complex subunit RuvB (Ectopseudomonas mendocina (strain ymp) (Pseudomonas mendocina)).